A 495-amino-acid polypeptide reads, in one-letter code: MSSALLDEAARIARQFDYPAAEVQRGVTEYIREIDEGLSKEHTTLSQIPTYVTAVPNGTEKGLYLAVDLGGTNFRVCSIDLHGDTTFSLTQSKIMIPRETMASGTAKDLFLFLARQIESFLRIHHNDHFEAHLRRRNEKNGNCEEDLFDLGFTFSFPVRQLGINKGTLIRWTKGFNIPDAVGKDVCALLQNAIDDLGLPVRVAALVNDTVGTLMARSYTSPGETGTFLGAIFGTGTNGAYVEKLDRITKLQTIEHSEYDKTTGEMIINAEWGSFDNHLSVLPNTIYDQQLDADSNNPGIQMFEKRVSGMFLGEILRRVMLDMQRNESLGFLRAGGASTVSVPQESSLYRQWGIDTSLLSLVEADKTENMEQIKVALKDHLKIERPTTDDCKAIQTVVHAIGKRAARLSAVPLAAILLSTGKLQKDDLVDIGVDGSLVEFYPNFEGYMRDALREVPEVGEAGNKKIRIGISKDGSGVGAALIALVASKEETRRKSQ.

Residues 3–483 (SALLDEAARI…SGVGAALIAL (481 aa)) enclose the Hexokinase domain. Residues 57–206 (NGTEKGLYLA…GLPVRVAALV (150 aa)) are hexokinase small subdomain. Lysine 93 serves as a coordination point for ATP. Residues 149 to 175 (DLGFTFSFPVRQLGINKGTLIRWTKGF) are glucose-binding. The tract at residues 207–472 (NDTVGTLMAR…KKIRIGISKD (266 aa)) is hexokinase large subdomain. 472–477 (DGSGVG) is an ATP binding site.

This sequence belongs to the hexokinase family. As to quaternary structure, monomer.

It catalyses the reaction D-glucose + ATP = D-glucose 6-phosphate + ADP + H(+). The enzyme catalyses a D-hexose + ATP = a D-hexose 6-phosphate + ADP + H(+). It carries out the reaction D-mannose + ATP = D-mannose 6-phosphate + ADP + H(+). The catalysed reaction is D-glucosamine + ATP = D-glucosamine 6-phosphate + ADP + H(+). The protein operates within carbohydrate metabolism; hexose metabolism. It participates in carbohydrate degradation; glycolysis; D-glyceraldehyde 3-phosphate and glycerone phosphate from D-glucose: step 1/4. Its function is as follows. The enzyme has great affinity for glucose. Mannose, 2-deoxyglucose and glucosamine can serve as substrates. The chain is Glucokinase (glkA) from Aspergillus niger.